Here is a 582-residue protein sequence, read N- to C-terminus: Inactive metallocarboxypeptidase ECM14 (582 aa).

The N-terminal stretch at 1–20 (MHILQVITGATLVSVPFVSA) is a signal peptide. Positions 21-172 (IPSSTSEFLP…QAVYESYPQP (152 aa)) are excised as a propeptide. The region spanning 200-522 (DYQPLSVIIP…NAVLVFGQFL (323 aa)) is the Peptidase M14 domain. Positions 265 and 268 each coordinate Zn(2+). Substrate contacts are provided by residues 265-268 (HARE), Arg323, and 340-341 (DR). The cysteines at positions 334 and 357 are disulfide-linked. N-linked (GlcNAc...) asparagine glycans are attached at residues Asn381 and Asn387. His397 is a Zn(2+) binding site. 398-399 (SY) contacts substrate. Over residues 561 to 571 (SNQLEDDDNEN) the composition is skewed to acidic residues. The disordered stretch occupies residues 561 to 582 (SNQLEDDDNENDTLLGFRTQKV). Asn571 is a glycosylation site (N-linked (GlcNAc...) asparagine).

Belongs to the peptidase M14 family. Zn(2+) serves as cofactor.

Its subcellular location is the vacuole. It is found in the secreted. In terms of biological role, inactive carboxypeptidase that may play a role in cell wall organization and biogenesis. In Coccidioides posadasii (strain C735) (Valley fever fungus), this protein is Inactive metallocarboxypeptidase ECM14 (ECM14).